The following is a 1058-amino-acid chain: Carbamoyl phosphate synthase large chain (1058 aa).

The segment at 1–401 (MPKRTDIQKI…SLLKACRSLE (401 aa)) is carboxyphosphate synthetic domain. 12 residues coordinate ATP: arginine 129, arginine 169, glycine 175, glycine 176, arginine 208, isoleucine 210, glutamate 215, glycine 241, isoleucine 242, histidine 243, glutamine 284, and glutamate 298. One can recognise an ATP-grasp 1 domain in the interval 133-327 (KQLMEELEQP…IAKLAAKIAV (195 aa)). Mg(2+) is bound by residues glutamine 284, glutamate 298, and asparagine 300. Mn(2+) contacts are provided by glutamine 284, glutamate 298, and asparagine 300. Residues 402 to 546 (IGVHHNEIPE…YSTYGWENES (145 aa)) form an oligomerization domain region. A carbamoyl phosphate synthetic domain region spans residues 547 to 929 (IRSDKESVLV…ALYKAFEASY (383 aa)). Residues 671–861 (EQALKELDIP…MAQVATKLIL (191 aa)) enclose the ATP-grasp 2 domain. Residues arginine 707, serine 746, isoleucine 748, glutamate 752, glycine 777, valine 778, histidine 779, serine 780, glutamine 820, and glutamate 832 each coordinate ATP. Residues glutamine 820, glutamate 832, and asparagine 834 each contribute to the Mg(2+) site. Mn(2+) contacts are provided by glutamine 820, glutamate 832, and asparagine 834. One can recognise an MGS-like domain in the interval 930–1058 (LHLPTFGNVV…ESRSFVTEAI (129 aa)). Positions 930 to 1058 (LHLPTFGNVV…ESRSFVTEAI (129 aa)) are allosteric domain.

Belongs to the CarB family. Composed of two chains; the small (or glutamine) chain promotes the hydrolysis of glutamine to ammonia, which is used by the large (or ammonia) chain to synthesize carbamoyl phosphate. Tetramer of heterodimers (alpha,beta)4. The cofactor is Mg(2+). It depends on Mn(2+) as a cofactor.

It catalyses the reaction hydrogencarbonate + L-glutamine + 2 ATP + H2O = carbamoyl phosphate + L-glutamate + 2 ADP + phosphate + 2 H(+). It carries out the reaction hydrogencarbonate + NH4(+) + 2 ATP = carbamoyl phosphate + 2 ADP + phosphate + 2 H(+). Its pathway is amino-acid biosynthesis; L-arginine biosynthesis; carbamoyl phosphate from bicarbonate: step 1/1. It participates in pyrimidine metabolism; UMP biosynthesis via de novo pathway; (S)-dihydroorotate from bicarbonate: step 1/3. In terms of biological role, large subunit of the glutamine-dependent carbamoyl phosphate synthetase (CPSase). CPSase catalyzes the formation of carbamoyl phosphate from the ammonia moiety of glutamine, carbonate, and phosphate donated by ATP, constituting the first step of 2 biosynthetic pathways, one leading to arginine and/or urea and the other to pyrimidine nucleotides. The large subunit (synthetase) binds the substrates ammonia (free or transferred from glutamine from the small subunit), hydrogencarbonate and ATP and carries out an ATP-coupled ligase reaction, activating hydrogencarbonate by forming carboxy phosphate which reacts with ammonia to form carbamoyl phosphate. This Streptococcus pneumoniae (strain P1031) protein is Carbamoyl phosphate synthase large chain.